A 457-amino-acid polypeptide reads, in one-letter code: ERV-H1 provirus ancestral Env polyprotein (457 aa).

The N-terminal stretch at 1 to 35 (MIFAGKAPSNTSTLMKFYSLILYSLLFSFPFLCHP) is a signal peptide. Residues N10 and N47 are each glycosylated (N-linked (GlcNAc...) asparagine). A CXXC motif is present at residues 64–67 (CWLC). N-linked (GlcNAc...) asparagine glycans are attached at residues N197, N222, N265, N283, N352, and N370. A fusion peptide region spans residues 388 to 408 (VIPLIPLMFGLGLSASTIALS).

This sequence belongs to the gamma type-C retroviral envelope protein family. HERV class-I H env subfamily. As to quaternary structure, the surface (SU) and transmembrane (TM) proteins form a heterodimer. SU and TM are attached by noncovalent interactions or by a labile interchain disulfide bond. In terms of processing, specific enzymatic cleavages in vivo yield the mature SU and TM proteins. The CXXC motif is highly conserved across a broad range of retroviral envelope proteins. It is thought to participate in the formation of a labile disulfide bond possibly with the CX6CC motif present in the transmembrane protein.

It localises to the virion. Its function is as follows. Retroviral envelope proteins mediate receptor recognition and membrane fusion during early infection. Endogenous envelope proteins may have kept, lost or modified their original function during evolution. In terms of biological role, SU mediates receptor recognition. TM anchors the envelope heterodimer to the viral membrane through one transmembrane domain. The other hydrophobic domain, called fusion peptide, mediates fusion of the viral membrane with the target cell membrane. In Pan troglodytes (Chimpanzee), this protein is ERV-H1 provirus ancestral Env polyprotein.